The sequence spans 155 residues: Transcriptional repressor NrdR (155 aa).

Residues 3 to 34 (CPFCGHSNTQVLDTRMSEDGDAVRRRRRCEAC) fold into a zinc finger. The 91-residue stretch at 49–139 (PAIVKKNGSR…VYRSFEDVSE (91 aa)) folds into the ATP-cone domain.

This sequence belongs to the NrdR family. It depends on Zn(2+) as a cofactor.

Functionally, negatively regulates transcription of bacterial ribonucleotide reductase nrd genes and operons by binding to NrdR-boxes. In Cupriavidus necator (strain ATCC 17699 / DSM 428 / KCTC 22496 / NCIMB 10442 / H16 / Stanier 337) (Ralstonia eutropha), this protein is Transcriptional repressor NrdR.